Here is a 372-residue protein sequence, read N- to C-terminus: Methenyltetrahydrofolate synthase domain-containing protein (372 aa).

Residues 246-258 (KQAGKDVTLRDEP) show a composition bias toward basic and acidic residues. The tract at residues 246–289 (KQAGKDVTLRDEPGSQQPAPGPIRRPQDRPQTGSRGGSRSPLQG) is disordered. The RRM domain maps to 296–369 (ATVCVGNLPF…NALRVSLGQQ (74 aa)).

This is Methenyltetrahydrofolate synthase domain-containing protein (Mthfsd) from Mus musculus (Mouse).